The chain runs to 546 residues: Putative inactive G-type lectin S-receptor-like serine/threonine-protein kinase SRK (546 aa).

The first 31 residues, 1 to 31 (MRGELPNKHHSYTFFVFLFFFLILFPDLSIS), serve as a signal peptide directing secretion. Topologically, residues 32 to 441 (VNTLSATESL…FGERRTIRGK (410 aa)) are extracellular. One can recognise a Bulb-type lectin domain in the interval 34 to 154 (TLSATESLTI…KINESDEFLW (121 aa)). Residues N46, N120, N147, and N243 are each glycosylated (N-linked (GlcNAc...) asparagine). Positions 293-329 (PKDTCDLYGICGPYAYCDMSTSPTCNCIKGFQPLSPQ) constitute an EGF-like; atypical domain. 4 disulfide bridges follow: C297–C309, C303–C317, C378–C403, and C382–C388. The PAN domain maps to 348-428 (CGEDRFFRLM…DGQDLFVRLA (81 aa)). N387 is a glycosylation site (N-linked (GlcNAc...) asparagine). The helical transmembrane segment at 442–462 (IIGLIIGISLMLVLSFIIYCF) threads the bilayer. The Cytoplasmic segment spans residues 463-546 (WKKKQKRARA…IVYKGRLLDG (84 aa)). Residues 524 to 546 (FSDSNILGRGGFGIVYKGRLLDG) enclose the Protein kinase domain. 530 to 538 (LGRGGFGIV) serves as a coordination point for ATP.

Belongs to the protein kinase superfamily. Ser/Thr protein kinase family.

The protein resides in the cell membrane. Its function is as follows. Truncated and inactivated form of SRK, the female specificity determinant of self-incompatibility when active. Most A.thaliana cultivars contain such an inactive form and thus, are self-fertiles. This chain is Putative inactive G-type lectin S-receptor-like serine/threonine-protein kinase SRK (PSEUDOSRKA), found in Arabidopsis thaliana (Mouse-ear cress).